The sequence spans 91 residues: Cell division topological specificity factor (91 aa).

The protein belongs to the MinE family.

Functionally, prevents the cell division inhibition by proteins MinC and MinD at internal division sites while permitting inhibition at polar sites. This ensures cell division at the proper site by restricting the formation of a division septum at the midpoint of the long axis of the cell. The sequence is that of Cell division topological specificity factor from Thermoanaerobacter pseudethanolicus (strain ATCC 33223 / 39E) (Clostridium thermohydrosulfuricum).